The sequence spans 333 residues: Mitochondrial glycine transporter (333 aa).

Solcar repeat units follow at residues 10–93, 125–209, and 235–319; these read SKST…IRQS, LSNT…GKKR, and HAAS…LIRR. 2 helical membrane passes run 16–41 and 68–94; these read FAAG…TRVQ and GAVP…RQSA. Residues 98 to 126 form a disordered region; it reads SPLPSSSSSTTTSSSTTTSSSSSSLPKLS. 4 helical membrane passes run 131–156, 184–207, 239–265, and 294–312; these read LLAG…VRYE, GYGA…EQGK, INFA…KTRI, and GLAL…AWTV.

Belongs to the mitochondrial carrier (TC 2.A.29) family. SLC25A38 subfamily.

It localises to the mitochondrion inner membrane. It carries out the reaction glycine(in) = glycine(out). Functionally, mitochondrial glycine transporter that imports glycine into the mitochondrial matrix. Plays an important role in providing glycine for the first enzymatic step in heme biosynthesis, the condensation of glycine with succinyl-CoA to produce 5-aminolevulinate (ALA) in the mitochondrial matrix. In Chaetomium globosum (strain ATCC 6205 / CBS 148.51 / DSM 1962 / NBRC 6347 / NRRL 1970) (Soil fungus), this protein is Mitochondrial glycine transporter.